The following is an 86-amino-acid chain: Cell division topological specificity factor (86 aa).

The protein belongs to the MinE family.

Its function is as follows. Prevents the cell division inhibition by proteins MinC and MinD at internal division sites while permitting inhibition at polar sites. This ensures cell division at the proper site by restricting the formation of a division septum at the midpoint of the long axis of the cell. This chain is Cell division topological specificity factor, found in Shewanella halifaxensis (strain HAW-EB4).